Consider the following 227-residue polypeptide: Pectinesterase inhibitor 28 (227 aa).

Residues 1 to 25 form the signal peptide; the sequence is MASSMAPAAAMAILLLALLMPATLC. Positions 28–50 are disordered; the sequence is SGPPSSKHGHGGHAKRAPPPASP. Over residues 34–43 the composition is skewed to basic residues; the sequence is KHGHGGHAKR. A disulfide bond links Cys66 and Cys75. N-linked (GlcNAc...) asparagine glycosylation is found at Asn67, Asn104, and Asn117. Cysteines 139 and 179 form a disulfide.

Belongs to the PMEI family. As to expression, expressed in roots, leaves, culms and flag leaves.

The protein resides in the secreted. The protein localises to the extracellular space. It localises to the apoplast. Its function is as follows. Pectin methylesterase (PME) inhibitor that inhibits PME in vitro. Functions as a critical structural modulator by regulating the degree of pectin methylesterification and the physiochemical properties of the cell wall components. This is Pectinesterase inhibitor 28 from Oryza sativa subsp. japonica (Rice).